The following is a 117-amino-acid chain: Large ribosomal subunit protein uL18 (117 aa).

The protein belongs to the universal ribosomal protein uL18 family. Part of the 50S ribosomal subunit; part of the 5S rRNA/L5/L18/L25 subcomplex. Contacts the 5S and 23S rRNAs.

In terms of biological role, this is one of the proteins that bind and probably mediate the attachment of the 5S RNA into the large ribosomal subunit, where it forms part of the central protuberance. This chain is Large ribosomal subunit protein uL18, found in Histophilus somni (strain 129Pt) (Haemophilus somnus).